A 693-amino-acid chain; its full sequence is Iron-sulfur clusters transporter atm1, mitochondrial (693 aa).

A mitochondrion-targeting transit peptide spans 1–28; sequence MLERCPWKLISSPRNIPARSFLNSRGTY. At 29–118 the chain is on the mitochondrial matrix side; the sequence is LVLRKSNILP…PKGKTNLKVR (90 aa). A helical membrane pass occupies residues 119–140; the sequence is VVSALALLVAAKILNVQVPFYF. The ABC transmembrane type-1 domain maps to 119–409; it reads VVSALALLVA…LGSVYREMRQ (291 aa). At 141 to 163 the chain is on the mitochondrial intermembrane side; the sequence is KSIIDTMNTTLVQEVGALWSTVG. Residues 164–187 traverse the membrane as a helical segment; it reads AVVLGYGFARIFSTVFQELRNSVF. The Mitochondrial matrix segment spans residues 188-236; that stretch reads AIVSQSAIRSVSSNVYQHLLNLDMNFHLSKQTGSITRAMDRGTKGISFI. The chain crosses the membrane as a helical span at residues 237–260; sequence LSSMVLHIIPITLEIAMVSGILTY. A topological domain (mitochondrial intermembrane) is located at residue lysine 261. A helical membrane pass occupies residues 262-282; it reads YGPSFSAIAATTVALYALFTV. Over 283–348 the chain is Mitochondrial matrix; it reads RTTSWRTVFR…ANVKVASSLA (66 aa). Residues 288-292 and 351-354 contribute to the glutathione site; these read RTVFR and NSGQ. The helical transmembrane segment at 349–367 threads the bilayer; that stretch reads FLNSGQAIIFSTALTLMMY. Residues 368 to 382 are Mitochondrial intermembrane-facing; sequence MGCRGIVTSNLTVGD. Residues 383–404 traverse the membrane as a helical segment; the sequence is LVMINQLVFQLSIPLNFLGSVY. Glutathione is bound at residue glycine 401. Residues 405 to 693 lie on the Mitochondrial matrix side of the membrane; it reads REMRQAFTDM…FGESNKSGDA (289 aa). One can recognise an ABC transporter domain in the interval 443–679; the sequence is IQFDNVHFSY…NSVYTSMWHS (237 aa). Residues tyrosine 452 and 476–487 each bind ATP; that span reads GASGCGKSTILR.

It belongs to the ABC transporter superfamily. ABCB family. Heavy Metal importer (TC 3.A.1.210) subfamily. As to quaternary structure, homodimer.

The protein localises to the mitochondrion inner membrane. Functionally, performs an essential function in the generation of cytoplasmic iron-sulfur proteins by mediating the ATP-dependent export of Fe/S cluster precursors synthesized by nfs1 and other mitochondrial proteins. Hydrolyzes ATP. Binds glutathione and may function by transporting a glutathione-conjugated iron-sulfur compound. The polypeptide is Iron-sulfur clusters transporter atm1, mitochondrial (Schizosaccharomyces pombe (strain 972 / ATCC 24843) (Fission yeast)).